A 929-amino-acid polypeptide reads, in one-letter code: Ras guanine nucleotide exchange factor M (929 aa).

Polar residues predominate over residues 1-15; it reads MWQKPSLTKSMMNEV. Disordered stretches follow at residues 1–102 and 169–316; these read MWQK…AAGS and TNNN…SKSL. A compositionally biased stretch (low complexity) spans 16 to 33; it reads SSNSPKSPTLTSSPSTQS. Residues 44–67 are compositionally biased toward gly residues; sequence LDGGGGGSNRLIFGGSGGGSGGGS. Low complexity-rich tracts occupy residues 68–80 and 169–191; these read LPSS…VNPF and TNNN…NNDG. The segment covering 192 to 202 has biased composition (gly residues); that stretch reads SGSGSGAGGSF. The span at 203 to 246 shows a compositional bias: low complexity; the sequence is IGTTTSAKTTSTTSTSAATTTTTTTTSSSSSSPSSSSPSSTSPT. Over residues 247–256 the composition is skewed to polar residues; that stretch reads IASNNDNNNK. The segment covering 270-287 has biased composition (low complexity); the sequence is PPLTLSQSQTQQQQQQKV. Polar residues predominate over residues 295–305; that stretch reads RFSTNSSGSQS. Residues 390-528 enclose the N-terminal Ras-GEF domain; that stretch reads NKFVVVSGPK…PILDLYEKLK (139 aa). The interval 540 to 583 is disordered; the sequence is SLSGSGGISNNNNGSDLKNSNNGNNSSNNNNSSSNSSSSSSSSD. Residues 676–911 enclose the Ras-GEF domain; sequence SPQDIAKQLT…YAFSKFIESP (236 aa).

Its function is as follows. Promotes the exchange of Ras-bound GDP by GTP. The sequence is that of Ras guanine nucleotide exchange factor M (gefM) from Dictyostelium discoideum (Social amoeba).